The primary structure comprises 61 residues: Large ribosomal subunit protein eL24 (61 aa).

4 residues coordinate Zn(2+): Cys7, Cys10, Cys33, and Cys37. The C4-type zinc finger occupies 7–37 (CSFCGHEIPPGTGLMYVRNDGTILWFCSSKC).

This sequence belongs to the eukaryotic ribosomal protein eL24 family. In terms of assembly, part of the 50S ribosomal subunit. Forms a cluster with proteins L3 and L14. Requires Zn(2+) as cofactor.

Functionally, binds to the 23S rRNA. The chain is Large ribosomal subunit protein eL24 from Saccharolobus islandicus (strain Y.N.15.51 / Yellowstone #2) (Sulfolobus islandicus).